We begin with the raw amino-acid sequence, 466 residues long: Ribulose bisphosphate carboxylase large chain (466 aa).

Position 5 is an N6,N6,N6-trimethyllysine (lysine 5). Positions 114 and 164 each coordinate substrate. Lysine 166 (proton acceptor) is an active-site residue. Lysine 168 contacts substrate. Mg(2+)-binding residues include lysine 192, aspartate 194, and glutamate 195. Lysine 192 carries the N6-carboxylysine modification. The active-site Proton acceptor is the histidine 285. 3 residues coordinate substrate: arginine 286, histidine 318, and serine 370.

This sequence belongs to the RuBisCO large chain family. Type I subfamily. Heterohexadecamer of 8 large chains and 8 small chains; disulfide-linked. The disulfide link is formed within the large subunit homodimers. Mg(2+) is required as a cofactor. The disulfide bond which can form in the large chain dimeric partners within the hexadecamer appears to be associated with oxidative stress and protein turnover.

Its subcellular location is the plastid. It localises to the chloroplast. The enzyme catalyses 2 (2R)-3-phosphoglycerate + 2 H(+) = D-ribulose 1,5-bisphosphate + CO2 + H2O. It carries out the reaction D-ribulose 1,5-bisphosphate + O2 = 2-phosphoglycolate + (2R)-3-phosphoglycerate + 2 H(+). In terms of biological role, ruBisCO catalyzes two reactions: the carboxylation of D-ribulose 1,5-bisphosphate, the primary event in carbon dioxide fixation, as well as the oxidative fragmentation of the pentose substrate in the photorespiration process. Both reactions occur simultaneously and in competition at the same active site. This Poliothyrsis sinensis (Chinese pearlbloom tree) protein is Ribulose bisphosphate carboxylase large chain.